The primary structure comprises 182 residues: Riboflavin kinase (182 aa).

Residues Thr-39 and Asn-41 each coordinate Mg(2+). Glu-117 functions as the Nucleophile in the catalytic mechanism.

Belongs to the flavokinase family. Zn(2+) is required as a cofactor. Mg(2+) serves as cofactor.

The enzyme catalyses riboflavin + ATP = FMN + ADP + H(+). It functions in the pathway cofactor biosynthesis; FMN biosynthesis; FMN from riboflavin (ATP route): step 1/1. Its function is as follows. Catalyzes the phosphorylation of riboflavin (vitamin B2) to form flavin mononucleotide (FMN) coenzyme. This chain is Riboflavin kinase (FMN1), found in Lodderomyces elongisporus (strain ATCC 11503 / CBS 2605 / JCM 1781 / NBRC 1676 / NRRL YB-4239) (Yeast).